The sequence spans 327 residues: Ribose-phosphate pyrophosphokinase (327 aa).

Residue 51–53 participates in ATP binding; sequence DGE. H144 and D183 together coordinate Mg(2+). Residue K207 is part of the active site. Residues R209, D233, and 237–241 each bind D-ribose 5-phosphate; that span reads DTGGT.

This sequence belongs to the ribose-phosphate pyrophosphokinase family. Class I subfamily. Homohexamer. The cofactor is Mg(2+).

The protein localises to the cytoplasm. It carries out the reaction D-ribose 5-phosphate + ATP = 5-phospho-alpha-D-ribose 1-diphosphate + AMP + H(+). The protein operates within metabolic intermediate biosynthesis; 5-phospho-alpha-D-ribose 1-diphosphate biosynthesis; 5-phospho-alpha-D-ribose 1-diphosphate from D-ribose 5-phosphate (route I): step 1/1. Involved in the biosynthesis of the central metabolite phospho-alpha-D-ribosyl-1-pyrophosphate (PRPP) via the transfer of pyrophosphoryl group from ATP to 1-hydroxyl of ribose-5-phosphate (Rib-5-P). The sequence is that of Ribose-phosphate pyrophosphokinase from Prochlorococcus marinus (strain SARG / CCMP1375 / SS120).